Reading from the N-terminus, the 384-residue chain is Sialyltransferase-like protein 3 (384 aa).

The Cytoplasmic portion of the chain corresponds to 1 to 5; sequence MKRRH. The helical; Signal-anchor for type II membrane protein transmembrane segment at 6–26 threads the bilayer; it reads WSHPSCGLLLLVAVFCLLLVF. Residues 27–384 lie on the Lumenal side of the membrane; it reads RCSQLRHSGD…FRLPPVSFYR (358 aa). Asn241 carries N-linked (GlcNAc...) asparagine glycosylation.

Belongs to the glycosyltransferase 29 family.

It localises to the golgi apparatus membrane. Possesses sialyltransferase-like activity in vitro. Transfers sialic acid to the glycoprotein asialofetuin. The transferred sialic acid is linked to galactose of Gal-beta-1,3-GalNAc through alpha-2,6-linkage. The sequence is that of Sialyltransferase-like protein 3 from Oryza sativa subsp. japonica (Rice).